The sequence spans 467 residues: UDP-glycosyltransferase 90A2 (467 aa).

UDP-alpha-D-glucose is bound by residues Ser289, 341-343, 358-366, and 380-383; these read VDQ, HCGWNSLTE, and AAEQ.

It belongs to the UDP-glycosyltransferase family.

The protein is UDP-glycosyltransferase 90A2 (UGT90A2) of Arabidopsis thaliana (Mouse-ear cress).